We begin with the raw amino-acid sequence, 397 residues long: Phosphoglycerate kinase (397 aa).

Substrate-binding positions include D21–N23, R37, H60–R63, R119, and R152. Residues K203, G294, E325, and G354–S357 contribute to the ATP site.

This sequence belongs to the phosphoglycerate kinase family. As to quaternary structure, monomer.

It localises to the cytoplasm. It catalyses the reaction (2R)-3-phosphoglycerate + ATP = (2R)-3-phospho-glyceroyl phosphate + ADP. It functions in the pathway carbohydrate degradation; glycolysis; pyruvate from D-glyceraldehyde 3-phosphate: step 2/5. This is Phosphoglycerate kinase from Chlorobium phaeobacteroides (strain DSM 266 / SMG 266 / 2430).